Here is a 92-residue protein sequence, read N- to C-terminus: Large ribosomal subunit protein eL43 (92 aa).

The C4-type zinc-finger motif lies at C39–C60.

The protein belongs to the eukaryotic ribosomal protein eL43 family.

This chain is Large ribosomal subunit protein eL43 (RPL43), found in Candida glabrata (strain ATCC 2001 / BCRC 20586 / JCM 3761 / NBRC 0622 / NRRL Y-65 / CBS 138) (Yeast).